The primary structure comprises 389 residues: Vacuolar protein sorting-associated protein vts1 (389 aa).

The segment at Asn149–Pro335 is disordered. Polar residues-rich tracts occupy residues Thr156–Thr177, Thr184–Pro219, and Ser227–Lys282. A compositionally biased stretch (low complexity) spans Thr294–Ser306. The segment covering Ala308 to Ser334 has biased composition (polar residues).

It belongs to the VTA1 family. In terms of assembly, homodimer (in cytoplasm).

Its subcellular location is the cytoplasm. The protein resides in the endosome membrane. Its function is as follows. Has a role in the formation of the multivesicular body (MVB). Required for the sorting of lipids to form intralumenal vesicles and for fluid-phase transport to the vacuole. Required for sorting several plasma membrane proteins into the MVB. The sequence is that of Vacuolar protein sorting-associated protein vts1 (vts1) from Schizosaccharomyces pombe (strain 972 / ATCC 24843) (Fission yeast).